A 425-amino-acid polypeptide reads, in one-letter code: Serine--tRNA ligase (425 aa).

An L-serine-binding site is contributed by Thr228 to Glu230. Arg259 to Glu261 lines the ATP pocket. Glu282 provides a ligand contact to L-serine. ATP is bound at residue Glu346–Ser349. Ser382 provides a ligand contact to L-serine.

This sequence belongs to the class-II aminoacyl-tRNA synthetase family. Type-1 seryl-tRNA synthetase subfamily. In terms of assembly, homodimer. The tRNA molecule binds across the dimer.

It is found in the cytoplasm. The enzyme catalyses tRNA(Ser) + L-serine + ATP = L-seryl-tRNA(Ser) + AMP + diphosphate + H(+). It carries out the reaction tRNA(Sec) + L-serine + ATP = L-seryl-tRNA(Sec) + AMP + diphosphate + H(+). Its pathway is aminoacyl-tRNA biosynthesis; selenocysteinyl-tRNA(Sec) biosynthesis; L-seryl-tRNA(Sec) from L-serine and tRNA(Sec): step 1/1. Catalyzes the attachment of serine to tRNA(Ser). Is also able to aminoacylate tRNA(Sec) with serine, to form the misacylated tRNA L-seryl-tRNA(Sec), which will be further converted into selenocysteinyl-tRNA(Sec). This chain is Serine--tRNA ligase, found in Rickettsia akari (strain Hartford).